The following is a 32-amino-acid chain: Jingzhaotoxin F4-32.60 (32 aa).

Intrachain disulfides connect Cys-2-Cys-17, Cys-9-Cys-22, and Cys-16-Cys-29. Asp-31 bears the Aspartic acid 1-amide mark.

Belongs to the neurotoxin 10 (Hwtx-1) family. 30 (Jztx-14) subfamily. Post-translationally, amidated as well as non-amidated forms are found in the venom. As to expression, expressed by the venom gland.

Its subcellular location is the secreted. Probable ion channel inhibitor. This is Jingzhaotoxin F4-32.60 from Chilobrachys guangxiensis (Chinese earth tiger tarantula).